Consider the following 505-residue polypeptide: Glycerol kinase (505 aa).

T15 is a binding site for ADP. ATP is bound by residues T15, T16, and S17. T15 provides a ligand contact to sn-glycerol 3-phosphate. An ADP-binding site is contributed by R19. Sn-glycerol 3-phosphate is bound by residues R85, E86, Y136, and D249. The glycerol site is built by R85, E86, Y136, D249, and Q250. Residues T271 and G314 each contribute to the ADP site. ATP-binding residues include T271, G314, Q318, and G415. Residues G415 and N419 each contribute to the ADP site.

This sequence belongs to the FGGY kinase family.

It carries out the reaction glycerol + ATP = sn-glycerol 3-phosphate + ADP + H(+). It participates in polyol metabolism; glycerol degradation via glycerol kinase pathway; sn-glycerol 3-phosphate from glycerol: step 1/1. Its activity is regulated as follows. Inhibited by fructose 1,6-bisphosphate (FBP). Its function is as follows. Key enzyme in the regulation of glycerol uptake and metabolism. Catalyzes the phosphorylation of glycerol to yield sn-glycerol 3-phosphate. This chain is Glycerol kinase, found in Mycoplasma mycoides subsp. mycoides SC (strain CCUG 32753 / NCTC 10114 / PG1).